Consider the following 602-residue polypeptide: Na(+)/dicarboxylate cotransporter 3 (602 aa).

Residues 1–16 (MAALAAAAKKVWSARR) are Cytoplasmic-facing. A helical membrane pass occupies residues 17-37 (LLVLLFTPLALLPVVFALPPK). Residues 38–55 (EGRCLFVILLMAVYWCTE) are Extracellular-facing. Residues 56–76 (ALPLSVTALLPIVLFPFMGIL) traverse the membrane as a helical segment. Residues 77-82 (PSNKVC) are Cytoplasmic-facing. A helical transmembrane segment spans residues 83–103 (PQYFLDTNFLFLSGLIMASAI). The Extracellular portion of the chain corresponds to 104 to 137 (EEWNLHRRIALKILMLVGVQPARLILGMMVTTSF). Residues 138–158 (LSMWLSNTASTAMMLPIANAI) traverse the membrane as a helical segment. At 159–229 (LKSLFGQKEV…SRKEDEYRRN (71 aa)) the chain is on the cytoplasmic side. The chain crosses the membrane as a helical span at residues 230-250 (IWKGFLISIPYSASIGGTATL). Residues 251–278 (TGTAPNLILLGQLKSFFPQCDVVNFGSW) are Extracellular-facing. The helical transmembrane segment at 279–299 (FIFAFPLMLLFLLAGWLWISF) threads the bilayer. Over 300 to 336 (LYGGLSFRGWRKNKSEIRTNAEDRARAVIREEYQNLG) the chain is Cytoplasmic. Residues 337–357 (PIKFAEQAVFILFCMFAILLF) form a helical membrane-spanning segment. Residues 358 to 372 (TRDPKFIPGWASLFN) are Extracellular-facing. The helical transmembrane segment at 373-393 (PGFLSDAVTGVAIVTILFFFP) threads the bilayer. The Cytoplasmic portion of the chain corresponds to 394-422 (SQRPSLKWWFDFKAPNTETEPLLTWKKAQ). Positions 423–443 (ETVPWNIILLLGGGFAMAKGC) form an intramembrane region, helical. At 444 to 461 (EESGLSVWIGGQLHPLEN) the chain is on the cytoplasmic side. A helical membrane pass occupies residues 462–482 (VPPALAVLLITVVIAFFTEFA). Residues 483-505 (SNTATIIIFLPVLAELAIRLRVH) are Extracellular-facing. The helical transmembrane segment at 506 to 526 (PLYLMIPGTVGCSFAFMLPVS) threads the bilayer. The Cytoplasmic portion of the chain corresponds to 527–546 (TPPNSIAFASGHLLVKDMVR). Residues 547–567 (TGLLMNLMGVLLLSLAMNTWA) form a helical membrane-spanning segment. Topologically, residues 568 to 602 (QTIFQLGTFPDWADMYSVNVTALPPTLANDTFRTL) are extracellular. N-linked (GlcNAc...) asparagine glycosylation is found at asparagine 586 and asparagine 596.

This sequence belongs to the SLC13A/DASS transporter (TC 2.A.47) family. NADC subfamily. Expression is highest in kidney. Detected in placenta, brain, liver and pancreas.

Its subcellular location is the cell membrane. The enzyme catalyses succinate(out) + 3 Na(+)(out) = succinate(in) + 3 Na(+)(in). It catalyses the reaction 2-oxoglutarate(out) + 3 Na(+)(out) = 2-oxoglutarate(in) + 3 Na(+)(in). It carries out the reaction N-acetyl-L-aspartate(out) + 3 Na(+)(out) = N-acetyl-L-aspartate(in) + 3 Na(+)(in). The catalysed reaction is glutarate(out) + 3 Na(+)(out) = glutarate(in) + 3 Na(+)(in). The enzyme catalyses fumarate(out) + 3 Na(+)(out) = fumarate(in) + 3 Na(+)(in). It catalyses the reaction malate(out) + 3 Na(+)(out) = malate(in) + 3 Na(+)(in). It carries out the reaction 2,2-dimethylsuccinate(out) + 3 Na(+)(out) = 2,2-dimethylsuccinate(in) + 3 Na(+)(in). The catalysed reaction is 2,3-dimethylsuccinate(out) + 3 Na(+)(out) = 2,3-dimethylsuccinate(in) + 3 Na(+)(in). The enzyme catalyses itaconate(out) + 3 Na(+)(out) = itaconate(in) + 3 Na(+)(in). With respect to regulation, li(+) decreases succinate transport in the presence of Na(+). In terms of biological role, high-affinity sodium-dicarboxylate cotransporter that accepts a range of substrates with 4-6 carbon atoms, such as the citric acid cycle intermediates succinate and alpha-ketoglutarate (2-oxoglutarate), as well as other compounds including N-acetyl-L-aspartate. Transports the dicarboxylate into the cell with a probable stoichiometry of 3 Na(+) for 1 divalent dicarboxylate, rendering the process electrogenic. Can transport citrate in a Na(+)-dependent manner, recognizing the divalent form of citrate rather than the trivalent form which is normally found in blood. Imports itaconate in hepatocytes leading to activation of TFEB-dependent lysosomal biogenesis involved in antibacterial innate immune response. The polypeptide is Na(+)/dicarboxylate cotransporter 3 (SLC13A3) (Homo sapiens (Human)).